Here is a 48-residue protein sequence, read N- to C-terminus: Hemoglobin subunit beta-B (48 aa).

Residues 2-48 (EWTDAERGAILSLWGKIDPDELGPALLARXXLVYXXTQRYFASFGDL) form the Globin domain.

The protein belongs to the globin family. Heterotetramer of two alpha chains and two beta chains. Red blood cells.

In terms of biological role, involved in oxygen transport from gills to the various peripheral tissues. The protein is Hemoglobin subunit beta-B of Catostomus clarkii (Desert sucker).